Consider the following 238-residue polypeptide: Small ribosomal subunit protein eS4 (238 aa).

An S4 RNA-binding domain is found at 38–100 (LPLAIVIRDV…TGEVYRVVPD (63 aa)).

Belongs to the eukaryotic ribosomal protein eS4 family.

This Pyrobaculum arsenaticum (strain DSM 13514 / JCM 11321 / PZ6) protein is Small ribosomal subunit protein eS4.